The chain runs to 418 residues: UDP-N-acetylglucosamine 1-carboxyvinyltransferase (418 aa).

Position 22 to 23 (22 to 23 (KN)) interacts with phosphoenolpyruvate. Arginine 91 is a UDP-N-acetyl-alpha-D-glucosamine binding site. The active-site Proton donor is the cysteine 115. Cysteine 115 bears the 2-(S-cysteinyl)pyruvic acid O-phosphothioketal mark. Residues aspartate 305 and isoleucine 327 each coordinate UDP-N-acetyl-alpha-D-glucosamine.

The protein belongs to the EPSP synthase family. MurA subfamily.

Its subcellular location is the cytoplasm. It carries out the reaction phosphoenolpyruvate + UDP-N-acetyl-alpha-D-glucosamine = UDP-N-acetyl-3-O-(1-carboxyvinyl)-alpha-D-glucosamine + phosphate. Its pathway is cell wall biogenesis; peptidoglycan biosynthesis. Cell wall formation. Adds enolpyruvyl to UDP-N-acetylglucosamine. This Aeromonas hydrophila subsp. hydrophila (strain ATCC 7966 / DSM 30187 / BCRC 13018 / CCUG 14551 / JCM 1027 / KCTC 2358 / NCIMB 9240 / NCTC 8049) protein is UDP-N-acetylglucosamine 1-carboxyvinyltransferase.